Here is a 448-residue protein sequence, read N- to C-terminus: Bifunctional protein GlmU (448 aa).

Residues 1–230 (MRSCLSIVLA…FDNIVGINNC (230 aa)) are pyrophosphorylase. UDP-N-acetyl-alpha-D-glucosamine-binding positions include 9 to 12 (LAAG), K23, Q76, and 81 to 82 (GT). Position 106 (D106) interacts with Mg(2+). UDP-N-acetyl-alpha-D-glucosamine-binding residues include G142, E156, N171, and N228. A Mg(2+)-binding site is contributed by N228. The linker stretch occupies residues 231–251 (FELFEADSLWQKRKARDLMLS). Residues 252-448 (GVTILKPETV…VRLSGNQQKK (197 aa)) form an N-acetyltransferase region. R317 and K335 together coordinate UDP-N-acetyl-alpha-D-glucosamine. H347 (proton acceptor) is an active-site residue. The UDP-N-acetyl-alpha-D-glucosamine site is built by Y350 and N361. Acetyl-CoA contacts are provided by residues A364, 370–371 (NY), S389, S407, and R424.

In the N-terminal section; belongs to the N-acetylglucosamine-1-phosphate uridyltransferase family. It in the C-terminal section; belongs to the transferase hexapeptide repeat family. As to quaternary structure, homotrimer. It depends on Mg(2+) as a cofactor.

The protein resides in the cytoplasm. It catalyses the reaction alpha-D-glucosamine 1-phosphate + acetyl-CoA = N-acetyl-alpha-D-glucosamine 1-phosphate + CoA + H(+). The enzyme catalyses N-acetyl-alpha-D-glucosamine 1-phosphate + UTP + H(+) = UDP-N-acetyl-alpha-D-glucosamine + diphosphate. It functions in the pathway nucleotide-sugar biosynthesis; UDP-N-acetyl-alpha-D-glucosamine biosynthesis; N-acetyl-alpha-D-glucosamine 1-phosphate from alpha-D-glucosamine 6-phosphate (route II): step 2/2. Its pathway is nucleotide-sugar biosynthesis; UDP-N-acetyl-alpha-D-glucosamine biosynthesis; UDP-N-acetyl-alpha-D-glucosamine from N-acetyl-alpha-D-glucosamine 1-phosphate: step 1/1. It participates in bacterial outer membrane biogenesis; LPS lipid A biosynthesis. Catalyzes the last two sequential reactions in the de novo biosynthetic pathway for UDP-N-acetylglucosamine (UDP-GlcNAc). The C-terminal domain catalyzes the transfer of acetyl group from acetyl coenzyme A to glucosamine-1-phosphate (GlcN-1-P) to produce N-acetylglucosamine-1-phosphate (GlcNAc-1-P), which is converted into UDP-GlcNAc by the transfer of uridine 5-monophosphate (from uridine 5-triphosphate), a reaction catalyzed by the N-terminal domain. The chain is Bifunctional protein GlmU from Bartonella quintana (strain Toulouse) (Rochalimaea quintana).